Here is a 361-residue protein sequence, read N- to C-terminus: Peptide chain release factor 1 (361 aa).

Q237 carries the N5-methylglutamine modification. The interval 286 to 306 (AKQDQEQAAKRKSLVGSGDRS) is disordered.

The protein belongs to the prokaryotic/mitochondrial release factor family. Post-translationally, methylated by PrmC. Methylation increases the termination efficiency of RF1.

The protein resides in the cytoplasm. Peptide chain release factor 1 directs the termination of translation in response to the peptide chain termination codons UAG and UAA. This chain is Peptide chain release factor 1, found in Coxiella burnetii (strain CbuG_Q212) (Coxiella burnetii (strain Q212)).